Consider the following 154-residue polypeptide: Peptidoglycan amidase Tse1 (154 aa).

A disulfide bridge connects residues C7 and C148. C30 functions as the Nucleophile in the catalytic mechanism. H91 serves as the catalytic Proton acceptor.

Forms a heterotetramer with Tsi1 consisting of two Tse1 dimers and two Tsi1 dimers. Formation of the complex inactivates Tse1 enzymatic activity.

It localises to the host membrane. It is found in the secreted. It catalyses the reaction Hydrolysis of gamma-D-glutamyl bonds to the L-terminus (position 7) of meso-diaminopimelic acid (meso-A2pm) in 7-(L-Ala-gamma-D-Glu)-meso-A2pm and 7-(L-Ala-gamma-D-Glu)-7-(D-Ala)-meso-A2pm. It is required that the D-terminal amino and carboxy groups of meso-A2pm are unsubstituted.. Its function is as follows. Toxin secreted by the H1 type VI (H1-T6SS) secretion system into the periplasm of recipient cells. Degrades peptidoglycan via amidase activity thereby helping itself to compete with other bacteria. To protect itself, the bacterium synthesizes immunity protein Tsi1 that specifically interacts with and inactivates cognate toxin. In Pseudomonas aeruginosa (strain ATCC 15692 / DSM 22644 / CIP 104116 / JCM 14847 / LMG 12228 / 1C / PRS 101 / PAO1), this protein is Peptidoglycan amidase Tse1.